The chain runs to 224 residues: UPF0758 protein LCA_0852 (224 aa).

The 123-residue stretch at 100–222 (VVASSQMVGQ…YLSLREEGYL (123 aa)) folds into the MPN domain. Zn(2+) is bound by residues H171, H173, and D184. Residues 171–184 (HNHPSGQLAPSTQD) carry the JAMM motif motif.

The protein belongs to the UPF0758 family.

The sequence is that of UPF0758 protein LCA_0852 from Latilactobacillus sakei subsp. sakei (strain 23K) (Lactobacillus sakei subsp. sakei).